The chain runs to 152 residues: MSAICVIKGDGVDGIINFKQNDNKSPVIISGVISGLKEGKHGFHVHEFGDTTNGCLSAGAHFNPFKKEHGSPNDENRHVGDLGNIESNKDKKSIINITDNIITLFGQNSIIGRSIVVHDKEDDLGRGNSQDSKITGNAGSRLGCGIIALSKI.

Residues H44, H46, and H61 each coordinate Cu cation. A disulfide bridge connects residues C55 and C144. Positions 61, 69, 78, and 81 each coordinate Zn(2+). Residue H118 participates in Cu cation binding.

This sequence belongs to the Cu-Zn superoxide dismutase family. It depends on Cu cation as a cofactor. Zn(2+) is required as a cofactor.

It catalyses the reaction 2 superoxide + 2 H(+) = H2O2 + O2. Destroys radicals which are normally produced within the cells and which are toxic to biological systems. This Dictyostelium discoideum (Social amoeba) protein is Superoxide dismutase [Cu-Zn] 5 (sodE).